We begin with the raw amino-acid sequence, 824 residues long: Glycogen phosphorylase (824 aa).

Lys667 is subject to N6-(pyridoxal phosphate)lysine.

It belongs to the glycogen phosphorylase family. Pyridoxal 5'-phosphate is required as a cofactor.

It carries out the reaction [(1-&gt;4)-alpha-D-glucosyl](n) + phosphate = [(1-&gt;4)-alpha-D-glucosyl](n-1) + alpha-D-glucose 1-phosphate. In terms of biological role, phosphorylase is an important allosteric enzyme in carbohydrate metabolism. Enzymes from different sources differ in their regulatory mechanisms and in their natural substrates. However, all known phosphorylases share catalytic and structural properties. The polypeptide is Glycogen phosphorylase (glgP) (Chlamydia pneumoniae (Chlamydophila pneumoniae)).